The following is a 201-amino-acid chain: Small ribosomal subunit protein uS4 (201 aa).

The S4 RNA-binding domain maps to 91 to 151; the sequence is SRLDNVVYRA…EKSQKMIWFE (61 aa).

This sequence belongs to the universal ribosomal protein uS4 family. In terms of assembly, part of the 30S ribosomal subunit. Contacts protein S5. The interaction surface between S4 and S5 is involved in control of translational fidelity.

Functionally, one of the primary rRNA binding proteins, it binds directly to 16S rRNA where it nucleates assembly of the body of the 30S subunit. Its function is as follows. With S5 and S12 plays an important role in translational accuracy. This chain is Small ribosomal subunit protein uS4, found in Corynebacterium diphtheriae (strain ATCC 700971 / NCTC 13129 / Biotype gravis).